The sequence spans 123 residues: Beta-defensin 126 (123 aa).

An N-terminal signal peptide occupies residues 1-20 (MKSLLFTLAVFMLLAQLVSG). Positions 21-63 (NLYVKRCLNDIGICKKTCKPEEVRSEHGWVMCGKRKACCVPAD) are in vitro binds to LPS, mediates antimicrobial activity and inhibits LPS-mediated inflammation. 3 cysteine pairs are disulfide-bonded: cysteine 27-cysteine 58, cysteine 34-cysteine 52, and cysteine 38-cysteine 59.

This sequence belongs to the beta-defensin family. As to quaternary structure, homodimer or homooligomer; disulfide-linked. In terms of processing, O-glycosylated; glycans contain sialic acids alpha(2,3)-linked to galactose and N-acetylgalactosamine. The C-terminal O-glycosylation contributes substantially to the sperm glyocalyx. As to expression, high-level and epididymis-specific expression. Detected in epithelial cells lining the efferent ductules, initial segment, and cauda regions of the epididymis, but not on spermatozoa.

It localises to the secreted. In terms of biological role, highly glycosylated atypical beta-defensin involved in several aspects of sperm function. Facilitates sperm transport in the female reproductive tract and contributes to sperm protection against immunodetection; both functions are probably implicating the negative surface charge provided by its O-linked oligosaccharides in the sperm glycocalyx. Involved in binding of sperm to oviductal epithelial cells to form a sperm reservoir until ovulation. Release from the sperm surface during capacitation and ovaluation by an elevation of oviductal fluid pH is unmasking other surface components and allows sperm to penetrate the cumulus matrix and bind to the zona pellucida of the oocyte. In vitro has antimicrobial activity and may inhibit LPS-mediated inflammation. This Macaca fascicularis (Crab-eating macaque) protein is Beta-defensin 126 (DEFB126).